Reading from the N-terminus, the 472-residue chain is Poly(A) polymerase catalytic subunit (472 aa).

Residues aspartate 191 and aspartate 193 contribute to the active site.

It belongs to the poxviridae poly(A) polymerase catalytic subunit family. As to quaternary structure, heterodimer of a large (catalytic) subunit and a small (regulatory) subunit.

The enzyme catalyses RNA(n) + ATP = RNA(n)-3'-adenine ribonucleotide + diphosphate. Functionally, polymerase that creates the 3'-poly(A) tail of mRNA's. This is Poly(A) polymerase catalytic subunit (PAPL) from Capra hircus (Goat).